The sequence spans 233 residues: Large ribosomal subunit protein uL1 (233 aa).

It belongs to the universal ribosomal protein uL1 family. Part of the 50S ribosomal subunit.

Binds directly to 23S rRNA. The L1 stalk is quite mobile in the ribosome, and is involved in E site tRNA release. Its function is as follows. Protein L1 is also a translational repressor protein, it controls the translation of the L11 operon by binding to its mRNA. This is Large ribosomal subunit protein uL1 from Psychrobacter sp. (strain PRwf-1).